The primary structure comprises 193 residues: Selenate reductase assembly chaperone protein (193 aa).

It belongs to the type II DMSO reductase enzyme chaperone family.

It is found in the cytoplasm. May function as a system-specific chaperone protein essential for the assembly of an active selenate reductase SerABC. In Thauera selenatis, this protein is Selenate reductase assembly chaperone protein.